Reading from the N-terminus, the 216-residue chain is MOB kinase activator 1B (216 aa).

Ser-2 is modified (N-acetylserine). Residues Thr-12 and Thr-35 each carry the phosphothreonine; by STK4/MST1 modification. Zn(2+)-binding residues include Cys-79, Cys-84, His-161, and His-166.

Belongs to the MOB1/phocein family. In terms of assembly, binds STK38L. Interacts with LATS1 and LATS2. Phosphorylated by STK3/MST2 and STK4/MST1 and this phosphorylation enhances its binding to LATS1. As to expression, adrenal gland, bone marrow, brain, lung, placenta, prostate, salivary gland, skeletal muscle, testis, thymus, thyroid gland, uterus, colon with mucosa, fetal brain and fetal liver.

It localises to the cytoplasm. The protein resides in the nucleus. In terms of biological role, activator of LATS1/2 in the Hippo signaling pathway which plays a pivotal role in organ size control and tumor suppression by restricting proliferation and promoting apoptosis. The core of this pathway is composed of a kinase cascade wherein STK3/MST2 and STK4/MST1, in complex with its regulatory protein SAV1, phosphorylates and activates LATS1/2 in complex with its regulatory protein MOB1, which in turn phosphorylates and inactivates YAP1 oncoprotein and WWTR1/TAZ. Phosphorylation of YAP1 by LATS1/2 inhibits its translocation into the nucleus to regulate cellular genes important for cell proliferation, cell death, and cell migration. Stimulates the kinase activity of STK38L. The sequence is that of MOB kinase activator 1B from Homo sapiens (Human).